The sequence spans 404 residues: Triose phosphate/phosphate translocator, chloroplastic (404 aa).

The transit peptide at Met-1–Thr-74 directs the protein to the chloroplast. The Chloroplast intermembrane portion of the chain corresponds to Ala-75–Pro-98. A helical membrane pass occupies residues Ala-99–Leu-119. The Lumenal portion of the chain corresponds to Asn-120–Tyr-131. A helical membrane pass occupies residues Phe-132 to Gly-152. At Leu-153 to Gln-209 the chain is on the chloroplast intermembrane side. Residues Phe-210–Gly-230 traverse the membrane as a helical segment. Residues Val-231–Asn-274 lie on the Lumenal side of the membrane. The helical transmembrane segment at Ile-275 to Val-294 threads the bilayer. Topologically, residues Glu-295–Gln-372 are chloroplast intermembrane. Residues Thr-373–Lys-393 traverse the membrane as a helical segment. Topologically, residues Met-394–Thr-404 are lumenal.

The protein belongs to the TPT transporter family. TPT (TC 2.A.7.9) subfamily. In terms of processing, the N-terminus is blocked.

The protein localises to the plastid. It localises to the chloroplast membrane. Its function is as follows. Mediates the export of fixed carbons from the chloroplasts into the cytosol in the form of triose phosphates. This is Triose phosphate/phosphate translocator, chloroplastic from Spinacia oleracea (Spinach).